The primary structure comprises 292 residues: Proteasome subunit beta 2 (292 aa).

The propeptide at M1 to G59 is removed in mature form; by autocatalysis. T60 (nucleophile) is an active-site residue.

This sequence belongs to the peptidase T1B family. The 20S proteasome core is composed of 14 alpha and 14 beta subunits that assemble into four stacked heptameric rings, resulting in a barrel-shaped structure. The two inner rings, each composed of seven catalytic beta subunits, are sandwiched by two outer rings, each composed of seven alpha subunits. All four combinations of alpha- and beta-subunits (beta2-alpha1, beta2-alpha2, beta1-alpha2 and beta1-alpha1) yield fully assembled and proteolytically active proteasomes. The catalytic chamber with the active sites is on the inside of the barrel. Has probably a gated structure, the ends of the cylinder being occluded by the N-termini of the alpha-subunits. Is likely capped by the proteasome-associated ATPase, ARC.

The protein localises to the cytoplasm. The catalysed reaction is Cleavage of peptide bonds with very broad specificity.. Its pathway is protein degradation; proteasomal Pup-dependent pathway. With respect to regulation, the formation of the proteasomal ATPase ARC-20S proteasome complex, likely via the docking of the C-termini of ARC into the intersubunit pockets in the alpha-rings, may trigger opening of the gate for substrate entry. Interconversion between the open-gate and close-gate conformations leads to a dynamic regulation of the 20S proteasome proteolysis activity. Functionally, component of the proteasome core, a large protease complex with broad specificity involved in protein degradation. The R.erythropolis proteasomes are able to cleave oligopeptides after Tyr, Phe and Leu, very poorly after Arg but not after Glu. Thus, displays chymotrypsin-like activity, low trypsin-like activity but no caspase-like activity. The chain is Proteasome subunit beta 2 from Rhodococcus erythropolis (Arthrobacter picolinophilus).